The chain runs to 303 residues: Probable 5-dehydro-4-deoxyglucarate dehydratase (303 aa).

The protein belongs to the DapA family.

The enzyme catalyses 5-dehydro-4-deoxy-D-glucarate + H(+) = 2,5-dioxopentanoate + CO2 + H2O. It functions in the pathway carbohydrate acid metabolism; D-glucarate degradation; 2,5-dioxopentanoate from D-glucarate: step 2/2. This Polaromonas naphthalenivorans (strain CJ2) protein is Probable 5-dehydro-4-deoxyglucarate dehydratase.